Here is a 499-residue protein sequence, read N- to C-terminus: Glutamate--tRNA ligase (499 aa).

The short motif at 12–22 is the 'HIGH' region element; the sequence is PSPTGHLHIGN. The 'KMSKS' region signature appears at 259–263; sequence KLSKR. ATP is bound at residue Lys-262.

It belongs to the class-I aminoacyl-tRNA synthetase family. Glutamate--tRNA ligase type 1 subfamily. In terms of assembly, monomer.

It is found in the cytoplasm. It catalyses the reaction tRNA(Glu) + L-glutamate + ATP = L-glutamyl-tRNA(Glu) + AMP + diphosphate. In terms of biological role, catalyzes the attachment of glutamate to tRNA(Glu) in a two-step reaction: glutamate is first activated by ATP to form Glu-AMP and then transferred to the acceptor end of tRNA(Glu). The sequence is that of Glutamate--tRNA ligase from Lactobacillus johnsonii (strain CNCM I-12250 / La1 / NCC 533).